The chain runs to 274 residues: Nitrogenase iron protein (274 aa).

An ATP-binding site is contributed by 8–15 (GKGGIGKS). Residue Cys94 participates in [4Fe-4S] cluster binding. Arg97 carries the ADP-ribosylarginine; by dinitrogenase reductase ADP-ribosyltransferase modification. A [4Fe-4S] cluster-binding site is contributed by Cys131.

Belongs to the NifH/BchL/ChlL family. In terms of assembly, homodimer. Requires [4Fe-4S] cluster as cofactor. In terms of processing, the reversible ADP-ribosylation of Arg-97 inactivates the nitrogenase reductase and regulates nitrogenase activity.

It catalyses the reaction N2 + 8 reduced [2Fe-2S]-[ferredoxin] + 16 ATP + 16 H2O = H2 + 8 oxidized [2Fe-2S]-[ferredoxin] + 2 NH4(+) + 16 ADP + 16 phosphate + 6 H(+). Its function is as follows. The key enzymatic reactions in nitrogen fixation are catalyzed by the nitrogenase complex, which has 2 components: the iron protein and the molybdenum-iron protein. This is Nitrogenase iron protein from Chlorobium phaeovibrioides (strain DSM 265 / 1930) (Prosthecochloris vibrioformis (strain DSM 265)).